A 159-amino-acid polypeptide reads, in one-letter code: NADH-quinone oxidoreductase subunit B (159 aa).

[4Fe-4S] cluster is bound by residues Cys37, Cys38, Cys102, and Cys132.

The protein belongs to the complex I 20 kDa subunit family. NDH-1 is composed of 14 different subunits. Subunits NuoB, C, D, E, F, and G constitute the peripheral sector of the complex. It depends on [4Fe-4S] cluster as a cofactor.

It is found in the cell inner membrane. The enzyme catalyses a quinone + NADH + 5 H(+)(in) = a quinol + NAD(+) + 4 H(+)(out). Functionally, NDH-1 shuttles electrons from NADH, via FMN and iron-sulfur (Fe-S) centers, to quinones in the respiratory chain. Couples the redox reaction to proton translocation (for every two electrons transferred, four hydrogen ions are translocated across the cytoplasmic membrane), and thus conserves the redox energy in a proton gradient. This Polaromonas naphthalenivorans (strain CJ2) protein is NADH-quinone oxidoreductase subunit B.